Consider the following 499-residue polypeptide: Glycerol kinase (499 aa).

Thr13 provides a ligand contact to ADP. Residues Thr13, Thr14, and Ser15 each contribute to the ATP site. Sn-glycerol 3-phosphate is bound at residue Thr13. Residue Arg17 participates in ADP binding. Arg83, Glu84, Tyr135, and Asp245 together coordinate sn-glycerol 3-phosphate. Positions 83, 84, 135, 245, and 246 each coordinate glycerol. ADP-binding residues include Thr267 and Gly310. ATP is bound by residues Thr267, Gly310, Gln314, and Gly411. 2 residues coordinate ADP: Gly411 and Asn415.

The protein belongs to the FGGY kinase family. Homotetramer and homodimer (in equilibrium).

It carries out the reaction glycerol + ATP = sn-glycerol 3-phosphate + ADP + H(+). Its pathway is polyol metabolism; glycerol degradation via glycerol kinase pathway; sn-glycerol 3-phosphate from glycerol: step 1/1. With respect to regulation, activated by phosphorylation and inhibited by fructose 1,6-bisphosphate (FBP). Its function is as follows. Key enzyme in the regulation of glycerol uptake and metabolism. Catalyzes the phosphorylation of glycerol to yield sn-glycerol 3-phosphate. The sequence is that of Glycerol kinase from Halothermothrix orenii (strain H 168 / OCM 544 / DSM 9562).